We begin with the raw amino-acid sequence, 67 residues long: Non-specific lipid-transfer protein 2P (67 aa).

4 cysteine pairs are disulfide-bonded: cysteine 2-cysteine 34, cysteine 10-cysteine 24, cysteine 25-cysteine 60, and cysteine 36-cysteine 67.

Functionally, transfer lipids across membranes. May play a role in plant defense or in the biosynthesis of cuticle layers. This Triticum aestivum (Wheat) protein is Non-specific lipid-transfer protein 2P.